A 296-amino-acid polypeptide reads, in one-letter code: Glycine and tyrosine-rich protein (296 aa).

Positions 1 to 18 are cleaved as a signal peptide; that stretch reads MKVLVTALIISFSTAVLT. Residues 157–280 form a disordered region; it reads MESRLRPQAT…NQPEETPAPN (124 aa). Residues 172–264 are compositionally biased toward low complexity; it reads TGGQPSTGGK…STGGQPSTGG (93 aa).

As to expression, component of the acid-insoluble and acid-soluble organic matrix of calcified layers of the shell (at protein level).

The protein localises to the secreted. In Lottia gigantea (Giant owl limpet), this protein is Glycine and tyrosine-rich protein.